The primary structure comprises 484 residues: UDP-N-acetylmuramoyl-L-alanyl-D-glutamate--2,6-diaminopimelate ligase (484 aa).

110–116 lines the ATP pocket; sequence GTNGKTT. UDP-N-acetyl-alpha-D-muramoyl-L-alanyl-D-glutamate contacts are provided by residues 152-153, serine 179, and arginine 187; that span reads TT. At lysine 219 the chain carries N6-carboxylysine. Meso-2,6-diaminopimelate contacts are provided by residues arginine 381, 405–408, glycine 455, and glutamate 459; that span reads DNPR. Positions 405–408 match the Meso-diaminopimelate recognition motif motif; that stretch reads DNPR.

Belongs to the MurCDEF family. MurE subfamily. The cofactor is Mg(2+). In terms of processing, carboxylation is probably crucial for Mg(2+) binding and, consequently, for the gamma-phosphate positioning of ATP.

It is found in the cytoplasm. It carries out the reaction UDP-N-acetyl-alpha-D-muramoyl-L-alanyl-D-glutamate + meso-2,6-diaminopimelate + ATP = UDP-N-acetyl-alpha-D-muramoyl-L-alanyl-gamma-D-glutamyl-meso-2,6-diaminopimelate + ADP + phosphate + H(+). Its pathway is cell wall biogenesis; peptidoglycan biosynthesis. Functionally, catalyzes the addition of meso-diaminopimelic acid to the nucleotide precursor UDP-N-acetylmuramoyl-L-alanyl-D-glutamate (UMAG) in the biosynthesis of bacterial cell-wall peptidoglycan. The chain is UDP-N-acetylmuramoyl-L-alanyl-D-glutamate--2,6-diaminopimelate ligase from Clostridium perfringens (strain 13 / Type A).